Reading from the N-terminus, the 322-residue chain is Ribose-phosphate pyrophosphokinase (322 aa).

Residues 43-45 and 102-103 contribute to the ATP site; these read DGE and RQ. H137 and D177 together coordinate Mg(2+). Residue K201 is part of the active site. Residues R203, D227, and 231–235 each bind D-ribose 5-phosphate; that span reads DTAGT.

It belongs to the ribose-phosphate pyrophosphokinase family. Class I subfamily. As to quaternary structure, homohexamer. The cofactor is Mg(2+).

Its subcellular location is the cytoplasm. The enzyme catalyses D-ribose 5-phosphate + ATP = 5-phospho-alpha-D-ribose 1-diphosphate + AMP + H(+). It functions in the pathway metabolic intermediate biosynthesis; 5-phospho-alpha-D-ribose 1-diphosphate biosynthesis; 5-phospho-alpha-D-ribose 1-diphosphate from D-ribose 5-phosphate (route I): step 1/1. In terms of biological role, involved in the biosynthesis of the central metabolite phospho-alpha-D-ribosyl-1-pyrophosphate (PRPP) via the transfer of pyrophosphoryl group from ATP to 1-hydroxyl of ribose-5-phosphate (Rib-5-P). The chain is Ribose-phosphate pyrophosphokinase from Xylella fastidiosa (strain Temecula1 / ATCC 700964).